Reading from the N-terminus, the 986-residue chain is MPPGRWHAARSAQVSREQGCLRMVKEEEEDGYISMQTARPQTLNRPGQELFRQLFRQLRYHESSGPLETLSRLQELCRWWMRPDVLSKAQMLELLVLEQFLSILPGELRTWVQLHCPESGAEVVALLEELQRDLDGTPLKDPCLTQNPDVHWIGTSALQPAQIWSPASHLKNSSALEDHLETSHGIGICDVLAEQTDSPAVSVPDYFQLEEGIEYQEALTFQDVEVTFSQEEWGCLNSAQRNLYRDVILENYGNVVSVVGSSPKPALISWLEARKPWGVNICTVQLKRDADAAPEGGKLQIKPNKFILKQKPSEYIEACVKTSVSPETSVSEETGLKESFKQKSRLQTSCGDSIQMKEMKEGADISQRTGRESEVLRNNDILELKHVKCVSVSRKRLSFKHGYDRNFRKSSHHYNNKYGEGLRGTGEGFGVYQNTGLKENGKDRYGETSRKSWHAHPEHRQPSYSEEGLFQCRVCGKAFKWRSNRIRHEKIHTGVKPYQCSLCEKAFQRLSSYRLHQKTHSKQKRGSSKYKNALTCSLDVSHHLTDRDERKHLHCNQCGKNFSCKSYAIEHQRIHTQEKPYKCTRCRKTFRWKSNFSRHMKLHHKEVYKQEKRQEDFKQSYRQSQVISTVEKTFPCQNCGKTFTQKKSLIEHQRIHTGEKPYQCSGCGETFTYRSSYIIHMKRTQHAIKIKPEHGCLTFSQGAVFPIPRGSHNTEGSNKCKYCGKAFHNRSFLLIHERVHTREKPYQCRECEKAFRWSSNLYRHQRKHFLHKRYKYRESKETSNLQSKILIDQKPFWCQECGKTFTRKRSLLDHKGIHSGERRFKCNLCEKSFDRNYRLVNHQRIHTTEQPQWRDKDFVGIHARSVDQRKHSNTLQSEYGLHSDKPGLSYCQDVRLNIQELSGKLRKECDNPSDESSKSIAFQNVPTKKKACHKCSTCGKTFKKHSHLISHKRCHTKERPFKCIVCGKTFRWSSNLTRHMKNHVRN.

The SCAN box domain occupies 52–134; the sequence is RQLFRQLRYH…ALLEELQRDL (83 aa). One can recognise a KRAB domain in the interval 219–289; sequence LTFQDVEVTF…NICTVQLKRD (71 aa). Glycyl lysine isopeptide (Lys-Gly) (interchain with G-Cter in SUMO2) cross-links involve residues Lys-302, Lys-360, and Lys-385. The interval 433 to 460 is disordered; that stretch reads QNTGLKENGKDRYGETSRKSWHAHPEHR. The segment covering 439–460 has biased composition (basic and acidic residues); the sequence is ENGKDRYGETSRKSWHAHPEHR. 2 C2H2-type zinc fingers span residues 470–492 and 498–520; these read FQCR…EKIH and YQCS…QKTH. Lys-524 is covalently cross-linked (Glycyl lysine isopeptide (Lys-Gly) (interchain with G-Cter in SUMO2)). 2 consecutive C2H2-type zinc fingers follow at residues 553–575 and 581–604; these read LHCN…QRIH and YKCT…KLHH. Lys-609 participates in a covalent cross-link: Glycyl lysine isopeptide (Lys-Gly) (interchain with G-Cter in SUMO2). 2 C2H2-type zinc fingers span residues 634 to 656 and 662 to 686; these read FPCQ…QRIH and YQCS…RTQH. Residue Lys-691 forms a Glycyl lysine isopeptide (Lys-Gly) (interchain with G-Cter in SUMO2) linkage. C2H2-type zinc fingers lie at residues 718 to 740, 746 to 768, 796 to 818, and 824 to 846; these read NKCK…ERVH, YQCR…QRKH, FWCQ…KGIH, and FKCN…QRIH. Lys-929 participates in a covalent cross-link: Glycyl lysine isopeptide (Lys-Gly) (interchain with G-Cter in SUMO2). C2H2-type zinc fingers lie at residues 933–955 and 961–983; these read HKCS…KRCH and FKCI…MKNH.

Belongs to the krueppel C2H2-type zinc-finger protein family.

The protein localises to the nucleus. Its function is as follows. Transcription regulator required to maintain maternal and paternal gene imprinting, a process by which gene expression is restricted in a parent of origin-specific manner by epigenetic modification of genomic DNA and chromatin, including DNA methylation. Acts by controlling DNA methylation during the earliest multicellular stages of development at multiple imprinting control regions (ICRs). Acts together with ZFP57, but ZFP57 plays the predominant role in imprinting maintenance. In contrast, ZNF445 seems to be the major factor in human early embryonic imprinting maintenance. In Mus musculus (Mouse), this protein is Zinc finger protein 445 (Znf445).